Here is a 227-residue protein sequence, read N- to C-terminus: UMP-CMP kinase (227 aa).

35–40 (GAGKGT) serves as a coordination point for ATP. The interval 55–85 (SAGDLLRAEQHREGSEYGQLIQTCIKEGSIV) is NMP. A ribonucleoside 5'-phosphate-binding positions include Arg-61, 83-85 (SIV), 122-125 (GFPR), and Gln-129. The segment at 159–169 (ERGKTSGREDD) is LID. An ATP-binding site is contributed by Arg-160. 2 residues coordinate a ribonucleoside 5'-phosphate: Arg-166 and Arg-177. ATP is bound at residue Val-205.

Belongs to the adenylate kinase family. UMP-CMP kinase subfamily. Monomer. Mg(2+) serves as cofactor.

Its subcellular location is the cytoplasm. The protein resides in the nucleus. It carries out the reaction UMP + ATP = UDP + ADP. Its function is as follows. Catalyzes the phosphorylation of pyrimidine nucleoside monophosphates at the expense of ATP. Plays an important role in de novo pyrimidine nucleotide biosynthesis. Has preference for UMP and CMP as phosphate acceptors, but can also use AMP and dCMP to a lesser extent. May play a role during the formation of basidiospores in the gill tissue. The chain is UMP-CMP kinase (uck1) from Lentinula edodes (Shiitake mushroom).